The primary structure comprises 631 residues: MGILAKIEQPRDLKGLTYPELEQLAQEIRAEMIDVVSANGGHLAPNLGVVELTLALHRVFDSPKDKIIWDVGHQSYVHKLVTGRQKEFKSLRLYKGLSGFPKRCESPHDCFETGHSSTSISAAVGFAKARDLRKEKNQVVAVIGDGAMTGGMAFEALNHAGHTKTNMIVVLNDNEMAIAQNVGAMSSYLNRLRTDPRYDRSKDEIENLLKRIPGIGSKMAKAAEKAKDSLKYLLVPGLLFEEMGFTYLGPVNGHDQIALEQVFEQAKMVKEPVLVHVLTQKGRGYEPSEKNPALFHGVGPFNKVTGEVIKKPAPPTYTQVFGEALCELAEKDPRITAITAAMPSGTGLNLFAQKFPDRFFDVGIAEQHAVTFSAALAFGGMKPVVSIYSTFYQRAYDQVLHDVCLPHANVVMAIDRAGVVGDDGPTHHGVFDISFLRVIPNLVFMAPKDENELRHMLYTSLQLDGPVALRYPRSVGQGVELTEELRELPVGKAEILQEGKDITLIGVGPMVYTCLAAAVELRHRGVEATVINLRYINPLDRESILRYARMTKRIITVEDHMLAGGMGSAVMEVLGDEGLTDVVVERLGYDEYVDQGAISLLHQGYGLSVVGILKAAERLKVLQRIEGRSSV.

Residues His73 and 114–116 (GHS) each bind thiamine diphosphate. Residue Asp145 participates in Mg(2+) binding. Thiamine diphosphate-binding positions include 146-147 (GA), Asn174, Tyr285, and Glu366. Asn174 contributes to the Mg(2+) binding site.

Belongs to the transketolase family. DXPS subfamily. Homodimer. Mg(2+) is required as a cofactor. It depends on thiamine diphosphate as a cofactor.

It catalyses the reaction D-glyceraldehyde 3-phosphate + pyruvate + H(+) = 1-deoxy-D-xylulose 5-phosphate + CO2. The protein operates within metabolic intermediate biosynthesis; 1-deoxy-D-xylulose 5-phosphate biosynthesis; 1-deoxy-D-xylulose 5-phosphate from D-glyceraldehyde 3-phosphate and pyruvate: step 1/1. In terms of biological role, catalyzes the acyloin condensation reaction between C atoms 2 and 3 of pyruvate and glyceraldehyde 3-phosphate to yield 1-deoxy-D-xylulose-5-phosphate (DXP). This Desulfitobacterium hafniense (strain DSM 10664 / DCB-2) protein is 1-deoxy-D-xylulose-5-phosphate synthase.